The chain runs to 1472 residues: ABC transporter FGM5 (1472 aa).

11 helical membrane-spanning segments follow: residues 32 to 52 (IILG…RVAT), 67 to 87 (FTKL…LILS), 100 to 120 (FAVA…ALSF), 163 to 183 (YAGV…LELQ), 197 to 217 (SPEE…IGIF), 271 to 291 (ALIV…GFQY), 316 to 336 (GLIG…ALFW), 386 to 406 (FHGL…CFLL), 412 to 432 (LAFI…TAIA), 493 to 513 (LLIM…VVAF), and 534 to 554 (LLTN…AAFV). The ABC transmembrane type-1 1 domain maps to 284 to 551 (IAMIGFQYAQ…MFQSVPAVIA (268 aa)). One can recognise an ABC transporter 1 domain in the interval 605–834 (ISIVDGSFGW…GIYIPTLGLS (230 aa)). 638 to 645 (GPVASGKS) contacts ATP. N-linked (GlcNAc...) asparagine glycosylation is found at Asn682, Asn696, Asn763, Asn784, and Asn843. Helical transmembrane passes span 900–920 (LLSG…MGWW), 938–958 (LFRG…VIFM), 1003–1023 (GELP…FAMA), and 1024–1044 (VVVA…FSII). In terms of domain architecture, ABC transmembrane type-1 2 spans 900 to 1139 (LLSGIMYAVG…VGVVAISTQL (240 aa)). An N-linked (GlcNAc...) asparagine glycan is attached at Asn1101. Residues 1116–1136 (FLATFLNLIVMVLAVGVVAIS) traverse the membrane as a helical segment. Residues 1218 to 1468 (YKNDDESPAS…EGSWFSQLWA (251 aa)) form the ABC transporter 2 domain. 1255-1262 (GRTGSGKS) contacts ATP. N-linked (GlcNAc...) asparagine glycosylation is found at Asn1277 and Asn1293.

It belongs to the ABC transporter superfamily. ABCC family. Conjugate transporter (TC 3.A.1.208) subfamily.

The protein resides in the cell membrane. It participates in secondary metabolite biosynthesis. Its function is as follows. ABC transporter; part of the Fg3_54/C64 gene cluster that mediates the biosynthesis of the octapeptide fusaoctaxin A, a virulence factor that is required for cell-to-cell invasiveness of plant host. The 2 nonribosomal peptide synthetases NRPS9 and NRPS5 form an assembly line which likely utilizes GABA as a starter unit (loaded on the unique module M1 of NRPS9) and sequentially incorporates seven extender units composed of the residues L-Ala, L-allo-Ile, L-Ser, L-Val, L-Ser, L-Leu and L-Leu, respectively. During the process, each of the residues that are tethered on modules M3-M7 of NRPS5 containing an E domain can undergo an epimerization reaction to produce a D-configuration before the transpeptidation reaction occurs. The elongation of the peptidyl chain might be terminated by module M8-mediated L-Leu incorporation, followed by R domain-catalyzed 4 electron reduction to release the resulting octapeptide from the assembly line as an alcohol. Fusaoctaxin A is cleaved by the cluster specific ABC transporter FGM5 to the pentapeptide fusapentaxin A and the tripeptide fusatrixin A. The other enzymes from the cluster, FGM1, FGM2, FGM3 and FGM9 seem not to be involved in the biosynthesis of fusaoctaxin A and their functions have still to be determined. This Gibberella zeae (strain ATCC MYA-4620 / CBS 123657 / FGSC 9075 / NRRL 31084 / PH-1) (Wheat head blight fungus) protein is ABC transporter FGM5.